The chain runs to 1080 residues: Carbamoyl phosphate synthase large chain (1080 aa).

The interval 1–403 (MPKRTDLETI…SLQKALRGLE (403 aa)) is carboxyphosphate synthetic domain. 12 residues coordinate ATP: R129, R169, G175, G176, E208, V210, E215, G241, V242, H243, Q285, and E299. The 196-residue stretch at 133–328 (RVAMGEIGLD…IAKVAAKLAV (196 aa)) folds into the ATP-grasp 1 domain. The Mg(2+) site is built by Q285, E299, and N301. Mn(2+) contacts are provided by Q285, E299, and N301. The oligomerization domain stretch occupies residues 404-554 (TGKIGLDPTG…YSTYEDECEA (151 aa)). A carbamoyl phosphate synthetic domain region spans residues 555–942 (LPTDRDKIMI…AFARAQEAGG (388 aa)). The ATP-grasp 2 domain maps to 679–876 (QQLVDKLGLK…LAKIAARCMA (198 aa)). Residues R715, R754, L756, E761, G787, V788, H789, S790, Q830, and E847 each contribute to the ATP site. Residues Q830, E847, and N849 each contribute to the Mg(2+) site. Residues Q830, E847, and N849 each coordinate Mn(2+). Positions 943–1080 (IKAPPLGKAF…LQELHKELEA (138 aa)) constitute an MGS-like domain. The segment at 943–1080 (IKAPPLGKAF…LQELHKELEA (138 aa)) is allosteric domain.

The protein belongs to the CarB family. Composed of two chains; the small (or glutamine) chain promotes the hydrolysis of glutamine to ammonia, which is used by the large (or ammonia) chain to synthesize carbamoyl phosphate. Tetramer of heterodimers (alpha,beta)4. Requires Mg(2+) as cofactor. Mn(2+) is required as a cofactor.

The catalysed reaction is hydrogencarbonate + L-glutamine + 2 ATP + H2O = carbamoyl phosphate + L-glutamate + 2 ADP + phosphate + 2 H(+). The enzyme catalyses hydrogencarbonate + NH4(+) + 2 ATP = carbamoyl phosphate + 2 ADP + phosphate + 2 H(+). It participates in amino-acid biosynthesis; L-arginine biosynthesis; carbamoyl phosphate from bicarbonate: step 1/1. It functions in the pathway pyrimidine metabolism; UMP biosynthesis via de novo pathway; (S)-dihydroorotate from bicarbonate: step 1/3. In terms of biological role, large subunit of the glutamine-dependent carbamoyl phosphate synthetase (CPSase). CPSase catalyzes the formation of carbamoyl phosphate from the ammonia moiety of glutamine, carbonate, and phosphate donated by ATP, constituting the first step of 2 biosynthetic pathways, one leading to arginine and/or urea and the other to pyrimidine nucleotides. The large subunit (synthetase) binds the substrates ammonia (free or transferred from glutamine from the small subunit), hydrogencarbonate and ATP and carries out an ATP-coupled ligase reaction, activating hydrogencarbonate by forming carboxy phosphate which reacts with ammonia to form carbamoyl phosphate. The polypeptide is Carbamoyl phosphate synthase large chain (Xanthomonas axonopodis pv. citri (strain 306)).